Consider the following 145-residue polypeptide: Synaptojanin-2-binding protein (145 aa).

Topologically, residues 1-117 are cytoplasmic; that stretch reads MNGRVDYLVT…GPQGEGEPSG (117 aa). Residues 13-100 enclose the PDZ domain; the sequence is EINLTRGPSG…AVSLRVQHRL (88 aa). A helical; Anchor for type IV membrane protein membrane pass occupies residues 118-138; it reads IPIAMVLVPVFALTMVAAWAF. Residues 139–145 lie on the Mitochondrial intermembrane side of the membrane; the sequence is MRYRQRL.

In terms of assembly, binds (via the PDZ domain) to isoform 2A of SYNJ2 (via the unique motif in the C-terminus). Interacts (via C-terminus) with RALBP1. Interacts (via PDZ domain) with ACVR2A (via C-terminus) and ACVR2B (via C-terminus). Forms a ternary complex with ACVR2A and RALBP1. Interacts with MAPK12. Interacts with DLL1; enhances DLL1 protein stability, and promotes notch signaling in endothelial cells.

The protein localises to the mitochondrion outer membrane. Its subcellular location is the cytoplasm. It localises to the perinuclear region. In terms of biological role, regulates endocytosis of activin type 2 receptor kinases through the Ral/RALBP1-dependent pathway and may be involved in suppression of activin-induced signal transduction. The sequence is that of Synaptojanin-2-binding protein from Bos taurus (Bovine).